A 320-amino-acid polypeptide reads, in one-letter code: Phospho-N-acetylmuramoyl-pentapeptide-transferase (320 aa).

A run of 10 helical transmembrane segments spans residues 7–27, 50–70, 77–97, 113–133, 148–168, 173–193, 198–216, 221–241, 247–267, and 297–317; these read ILAIIISFLIVLIVMPIVIPF, GTPTMGGLVIGLAIIVTSLIF, IGAPLIATVAFGLIGFIDDFI, LVLQFLISITFLYVIQKHLGS, WAYVPVMSVLMVFTVNAVNLT, GLASGVTMIVSLFLAIISIFS, MAIFSGAIVGSCMGFLRYN, VVFMGDTGSLMLGGSIFAIAV, VLVLVIGGLYIIEAVSVMLQV, and VVVVFWIFTILFCLLALAMIQ.

This sequence belongs to the glycosyltransferase 4 family. MraY subfamily. Mg(2+) is required as a cofactor.

The protein localises to the cell membrane. The enzyme catalyses UDP-N-acetyl-alpha-D-muramoyl-L-alanyl-gamma-D-glutamyl-meso-2,6-diaminopimeloyl-D-alanyl-D-alanine + di-trans,octa-cis-undecaprenyl phosphate = di-trans,octa-cis-undecaprenyl diphospho-N-acetyl-alpha-D-muramoyl-L-alanyl-D-glutamyl-meso-2,6-diaminopimeloyl-D-alanyl-D-alanine + UMP. Its pathway is cell wall biogenesis; peptidoglycan biosynthesis. Functionally, catalyzes the initial step of the lipid cycle reactions in the biosynthesis of the cell wall peptidoglycan: transfers peptidoglycan precursor phospho-MurNAc-pentapeptide from UDP-MurNAc-pentapeptide onto the lipid carrier undecaprenyl phosphate, yielding undecaprenyl-pyrophosphoryl-MurNAc-pentapeptide, known as lipid I. The chain is Phospho-N-acetylmuramoyl-pentapeptide-transferase from Caldicellulosiruptor bescii (strain ATCC BAA-1888 / DSM 6725 / KCTC 15123 / Z-1320) (Anaerocellum thermophilum).